The chain runs to 795 residues: Phenylalanine--tRNA ligase beta subunit (795 aa).

The tRNA-binding domain maps to 39 to 148; the sequence is AGSFNGVVVG…ADAPLGTDIR (110 aa). A B5 domain is found at 401–476; that stretch reads PKRATITLRR…RVYGYNNIPD (76 aa). Residues Asp-454, Asp-460, Glu-463, and Glu-464 each coordinate Mg(2+). Residues 701–794 form the FDX-ACB domain; that stretch reads SRFPANRRDI…LKERFQASLR (94 aa).

This sequence belongs to the phenylalanyl-tRNA synthetase beta subunit family. Type 1 subfamily. As to quaternary structure, tetramer of two alpha and two beta subunits. The cofactor is Mg(2+).

Its subcellular location is the cytoplasm. The enzyme catalyses tRNA(Phe) + L-phenylalanine + ATP = L-phenylalanyl-tRNA(Phe) + AMP + diphosphate + H(+). The chain is Phenylalanine--tRNA ligase beta subunit from Salmonella choleraesuis (strain SC-B67).